Here is a 600-residue protein sequence, read N- to C-terminus: Glutamine--fructose-6-phosphate aminotransferase [isomerizing] (600 aa).

Cysteine 2 serves as the catalytic Nucleophile; for GATase activity. Residues 2–217 enclose the Glutamine amidotransferase type-2 domain; sequence CGIVGFIGEQ…DKEIVIVTKE (216 aa). 2 SIS domains span residues 283-422 and 452-590; these read IRNA…AKGE and LAKQ…VDKP. Lysine 595 acts as the For Fru-6P isomerization activity in catalysis.

In terms of assembly, homodimer.

The protein localises to the cytoplasm. It carries out the reaction D-fructose 6-phosphate + L-glutamine = D-glucosamine 6-phosphate + L-glutamate. Its function is as follows. Catalyzes the first step in hexosamine metabolism, converting fructose-6P into glucosamine-6P using glutamine as a nitrogen source. The polypeptide is Glutamine--fructose-6-phosphate aminotransferase [isomerizing] (Bacillus cereus (strain ATCC 14579 / DSM 31 / CCUG 7414 / JCM 2152 / NBRC 15305 / NCIMB 9373 / NCTC 2599 / NRRL B-3711)).